The following is a 138-amino-acid chain: Regulator of ribonuclease activity B (138 aa).

Residues 111-138 (WGTYFEDPNGEEGDDDDYVDEDDDGVRH) are disordered. Residues 118–138 (PNGEEGDDDDYVDEDDDGVRH) are compositionally biased toward acidic residues.

Belongs to the RraB family. In terms of assembly, interacts with the C-terminal region of Rne.

It localises to the cytoplasm. Its function is as follows. Globally modulates RNA abundance by binding to RNase E (Rne) and regulating its endonucleolytic activity. Can modulate Rne action in a substrate-dependent manner by altering the composition of the degradosome. The chain is Regulator of ribonuclease activity B from Salmonella typhi.